We begin with the raw amino-acid sequence, 895 residues long: Putative endoplasmic reticulum metallopeptidase 1-A (895 aa).

A disordered region spans residues methionine 1–arginine 30. Over methionine 1 to serine 34 the chain is Cytoplasmic. The span at glutamate 10–arginine 30 shows a compositional bias: basic and acidic residues. Residues isoleucine 35–valine 55 traverse the membrane as a helical segment. The Lumenal segment spans residues alanine 56–serine 383. Residues histidine 174 and aspartate 186 each coordinate Zn(2+). Glutamate 220 serves as the catalytic Proton acceptor. Residues glutamate 221, glutamate 247, and histidine 323 each contribute to the Zn(2+) site. The helical transmembrane segment at valine 384–leucine 404 threads the bilayer. Topologically, residues arginine 405–histidine 423 are cytoplasmic. Residues valine 424–methionine 444 traverse the membrane as a helical segment. Topologically, residues aspartate 445–lysine 452 are lumenal. A helical transmembrane segment spans residues methionine 453–histidine 473. Topologically, residues serine 474 to threonine 492 are cytoplasmic. A helical membrane pass occupies residues isoleucine 493 to phenylalanine 513. At tyrosine 514–asparagine 517 the chain is on the lumenal side. The helical transmembrane segment at asparagine 518 to isoleucine 538 threads the bilayer. The Cytoplasmic segment spans residues arginine 539–arginine 544. The helical transmembrane segment at valine 545–isoleucine 565 threads the bilayer. Residues serine 566–glutamate 586 are Lumenal-facing. The chain crosses the membrane as a helical span at residues phenylalanine 587 to leucine 607. Topologically, residues phenylalanine 608–arginine 613 are cytoplasmic. The chain crosses the membrane as a helical span at residues methionine 614 to threonine 634. The Lumenal segment spans residues threonine 635 to phenylalanine 895. Asparagine 659, asparagine 702, and asparagine 758 each carry an N-linked (GlcNAc...) asparagine glycan.

This sequence belongs to the peptidase M28 family. Zn(2+) serves as cofactor.

The protein localises to the endoplasmic reticulum membrane. This chain is Putative endoplasmic reticulum metallopeptidase 1-A, found in Caenorhabditis elegans.